Here is a 906-residue protein sequence, read N- to C-terminus: MVGLGVFARKFFGSAYERRLKALRQKVAQINALEEQFQKLNDTQLCQKTDEFRKRLTEGETVDLLLPEAFATVREAAKRVYDMRPFDVQLIGGMVLHNCGIAEMRTGEGKTLMATLPIYLNALEGKGVHVVTVNDYLARRDAETMGKIFSFLGLTTGVILHDLDSDARRSAYACDITYATNNELGFDYLRDNMAFDRSQMVQRGHHYAIVDEVDSILIDEARTPLIISGPLEDRTDFYNLIDTFIPSLTPEDYEIDEKQKTITFTEVGTEKIEKMLEQAGHLKGKSLYDIENVAIIHHINNALKAHKLFVRDKDYIVRNNEIVIIDEFTGRMMPGRRYSEGLHQALEAKEHVAIQPENQTLASITFQNYFRMYRKLSGMTGTATTEAEEFSNIYDLEVVEIPTNLPIQRRDEDDEIYRTAEEKYRAIVRDIRQAHEKGQPILVGTTSIEKSEQLAERLRKEGITDFRVLNARYHEQEAYIIAQAGVPGALTIATNMAGRGTDIQLGGNVEMRIRQELQDMPEGIERTAKIEEIKKDVKQLKEKALAAGGFYVIATERHESRRIDNQLRGRSGRQGDPGRSKFFLSLQDDLMRIFGSNRMDGMLQKLGLKENEAITHPWINKALEKAQKKVEARNFEIRKNLLKYDDVMNDQRKVIFEQRMEIMNADDLIEMILEMRNEVIEDLVETYIPSETYSEKWDVKALQEEIHHLFNLELPVEEWAKEDGIAEEQILERISNAVTKLENERAERYSPEILAYFHKAVLLETIDTLWREHLVNLDHLRSVVGFRGYAQRDPLNEYKTESFELFQAMLRNLRRIVTSKLMRFEIIQQPTESLIPEQVDGNDSALNDQRKGNDSPLWMQIQENRVVVNPKDRNPKDSTTWGKVGRNERCPCGSEKKYKHCHGAFV.

ATP is bound by residues glutamine 89, 107–111 (GEGKT), and aspartate 502. Zn(2+)-binding residues include cysteine 890, cysteine 892, cysteine 901, and histidine 902.

The protein belongs to the SecA family. As to quaternary structure, monomer and homodimer. Part of the essential Sec protein translocation apparatus which comprises SecA, SecYEG and auxiliary proteins SecDF-YajC and YidC. Requires Zn(2+) as cofactor.

It localises to the cell inner membrane. It is found in the cytoplasm. The enzyme catalyses ATP + H2O + cellular proteinSide 1 = ADP + phosphate + cellular proteinSide 2.. Part of the Sec protein translocase complex. Interacts with the SecYEG preprotein conducting channel. Has a central role in coupling the hydrolysis of ATP to the transfer of proteins into and across the cell membrane, serving both as a receptor for the preprotein-SecB complex and as an ATP-driven molecular motor driving the stepwise translocation of polypeptide chains across the membrane. The polypeptide is Protein translocase subunit SecA (Bartonella quintana (strain Toulouse) (Rochalimaea quintana)).